Consider the following 94-residue polypeptide: Pyrimidine/purine nucleoside phosphorylase (94 aa).

It belongs to the nucleoside phosphorylase PpnP family.

The enzyme catalyses a purine D-ribonucleoside + phosphate = a purine nucleobase + alpha-D-ribose 1-phosphate. It carries out the reaction adenosine + phosphate = alpha-D-ribose 1-phosphate + adenine. The catalysed reaction is cytidine + phosphate = cytosine + alpha-D-ribose 1-phosphate. It catalyses the reaction guanosine + phosphate = alpha-D-ribose 1-phosphate + guanine. The enzyme catalyses inosine + phosphate = alpha-D-ribose 1-phosphate + hypoxanthine. It carries out the reaction thymidine + phosphate = 2-deoxy-alpha-D-ribose 1-phosphate + thymine. The catalysed reaction is uridine + phosphate = alpha-D-ribose 1-phosphate + uracil. It catalyses the reaction xanthosine + phosphate = alpha-D-ribose 1-phosphate + xanthine. In terms of biological role, catalyzes the phosphorolysis of diverse nucleosides, yielding D-ribose 1-phosphate and the respective free bases. Can use uridine, adenosine, guanosine, cytidine, thymidine, inosine and xanthosine as substrates. Also catalyzes the reverse reactions. This is Pyrimidine/purine nucleoside phosphorylase from Teredinibacter turnerae (strain ATCC 39867 / T7901).